The primary structure comprises 113 residues: Ribonuclease P protein component (113 aa).

It belongs to the RnpA family. In terms of assembly, consists of a catalytic RNA component (M1 or rnpB) and a protein subunit.

The catalysed reaction is Endonucleolytic cleavage of RNA, removing 5'-extranucleotides from tRNA precursor.. Its function is as follows. RNaseP catalyzes the removal of the 5'-leader sequence from pre-tRNA to produce the mature 5'-terminus. It can also cleave other RNA substrates such as 4.5S RNA. The protein component plays an auxiliary but essential role in vivo by binding to the 5'-leader sequence and broadening the substrate specificity of the ribozyme. This is Ribonuclease P protein component from Desulforamulus reducens (strain ATCC BAA-1160 / DSM 100696 / MI-1) (Desulfotomaculum reducens).